The sequence spans 83 residues: UPF0297 protein LCK_00468 (83 aa).

This sequence belongs to the UPF0297 family.

This Leuconostoc citreum (strain KM20) protein is UPF0297 protein LCK_00468.